The following is a 186-amino-acid chain: DNA-directed RNA polymerase 22 kDa subunit (186 aa).

The protein belongs to the poxviridae DNA-directed RNA polymerase 22 kDa subunit family. In terms of assembly, the DNA-dependent RNA polymerase used for intermediate and late genes expression consists of eight subunits Rpo30/OPG66, Rpo7/OPG90, Rpo22/OPG103, Rpo147/OPG105, Rpo18/OPG119, Rpo19/OPG131, Rpo132/OPG151 and Rpo35/OPG156. The same holoenzyme, with the addition of the transcription-specificity factor OPG109, is used for early gene expression.

The protein localises to the virion. The catalysed reaction is RNA(n) + a ribonucleoside 5'-triphosphate = RNA(n+1) + diphosphate. Functionally, part of the DNA-dependent RNA polymerase which catalyzes the transcription of viral DNA into RNA using the four ribonucleoside triphosphates as substrates. Responsible for the transcription of early, intermediate and late genes. DNA-dependent RNA polymerase associates with the early transcription factor (ETF), itself composed of OPG118 and OPG133, thereby allowing the early genes transcription. Late transcription, and probably also intermediate transcription, require newly synthesized RNA polymerase. This Vertebrata (FPV) protein is DNA-directed RNA polymerase 22 kDa subunit (OPG103).